We begin with the raw amino-acid sequence, 177 residues long: Small ribosomal subunit protein bS16 (177 aa).

Residues 80 to 177 form a disordered region; the sequence is GIIAMPANGS…AAEAPKEEAK (98 aa). Residues 107–122 are compositionally biased toward low complexity; that stretch reads AAPAAAPKAEAAPAAE.

This sequence belongs to the bacterial ribosomal protein bS16 family.

This chain is Small ribosomal subunit protein bS16, found in Pelagibacter ubique (strain HTCC1062).